Consider the following 230-residue polypeptide: MTIIAGTVVKGKQLGRKLGFPTANVDAKIHGLRNGVYGVLATVNHQFHLGVMNIGVKPTVGSNLEKTLEIFLFDFHRDIYGEKIECSILFKIREERRFDSLESLTKQIKKDISCVAKRFELIGIMAPNKKESLLSHQELNLPDLCFYKKCNNLYGVNRGVYNVIDNWFFEYGITQVAYRRIYILSFLSFLKEDNPKVSSKYIRFGAGGLADKLNRFISSYVEESEENILG.

The protein belongs to the RibR family.

The catalysed reaction is riboflavin + ATP = FMN + ADP + H(+). May be directly involved in the regulation of the rib genes. C-terminal part of RibR specifically binds to RFN of the rib leader of the riboflavin biosynthetic operon. The RFN element is a sequence within the rib-leader mRNA reported to serve as a receptor for an FMN-dependent riboswitch. Possibly, RibR produces the comodulator FMN through its own N-terminal flavokinase activity. FMN-activated RibR may stabilize the anti-anti terminator structure of RFN mRNA, causing transcription termination of the rib genes in trans. This Bacillus subtilis (strain 168) protein is RNA-binding riboflavin kinase RibR (ribR).